We begin with the raw amino-acid sequence, 395 residues long: S-adenosylmethionine synthase (395 aa).

ATP is bound at residue His18. Asp20 lines the Mg(2+) pocket. Glu46 provides a ligand contact to K(+). The L-methionine site is built by Glu59 and Gln103. A flexible loop region spans residues 103–113 (QSVDIAVGVDA). ATP-binding positions include 170-172 (DAK), 235-236 (KF), Asp244, 250-251 (RK), Ala267, and Lys271. Residue Asp244 coordinates L-methionine. Residue Lys275 coordinates L-methionine.

The protein belongs to the AdoMet synthase family. Homotetramer; dimer of dimers. It depends on Mg(2+) as a cofactor. Requires K(+) as cofactor.

Its subcellular location is the cytoplasm. The catalysed reaction is L-methionine + ATP + H2O = S-adenosyl-L-methionine + phosphate + diphosphate. It participates in amino-acid biosynthesis; S-adenosyl-L-methionine biosynthesis; S-adenosyl-L-methionine from L-methionine: step 1/1. Its function is as follows. Catalyzes the formation of S-adenosylmethionine (AdoMet) from methionine and ATP. The overall synthetic reaction is composed of two sequential steps, AdoMet formation and the subsequent tripolyphosphate hydrolysis which occurs prior to release of AdoMet from the enzyme. This Acidiphilium cryptum (strain JF-5) protein is S-adenosylmethionine synthase.